Here is a 432-residue protein sequence, read N- to C-terminus: Serine hydroxymethyltransferase (432 aa).

Residues Leu127 and 131 to 133 (GHL) contribute to the (6S)-5,6,7,8-tetrahydrofolate site. Position 236 is an N6-(pyridoxal phosphate)lysine (Lys236).

The protein belongs to the SHMT family. In terms of assembly, homodimer. Pyridoxal 5'-phosphate serves as cofactor.

The protein resides in the cytoplasm. It catalyses the reaction (6R)-5,10-methylene-5,6,7,8-tetrahydrofolate + glycine + H2O = (6S)-5,6,7,8-tetrahydrofolate + L-serine. It participates in one-carbon metabolism; tetrahydrofolate interconversion. The protein operates within amino-acid biosynthesis; glycine biosynthesis; glycine from L-serine: step 1/1. In terms of biological role, catalyzes the reversible interconversion of serine and glycine with tetrahydrofolate (THF) serving as the one-carbon carrier. This reaction serves as the major source of one-carbon groups required for the biosynthesis of purines, thymidylate, methionine, and other important biomolecules. Also exhibits THF-independent aldolase activity toward beta-hydroxyamino acids, producing glycine and aldehydes, via a retro-aldol mechanism. The polypeptide is Serine hydroxymethyltransferase (Rhizobium etli (strain ATCC 51251 / DSM 11541 / JCM 21823 / NBRC 15573 / CFN 42)).